The primary structure comprises 380 residues: tRNA-specific 2-thiouridylase MnmA (380 aa).

Residues 26 to 33 and L52 each bind ATP; that span reads AMSGGVDS. The active-site Nucleophile is the C120. C120 and C217 are disulfide-bonded. G144 is a binding site for ATP. Residues 166–168 are interaction with tRNA; that stretch reads RDQ. The active-site Cysteine persulfide intermediate is C217.

Belongs to the MnmA/TRMU family.

The protein resides in the cytoplasm. The catalysed reaction is S-sulfanyl-L-cysteinyl-[protein] + uridine(34) in tRNA + AH2 + ATP = 2-thiouridine(34) in tRNA + L-cysteinyl-[protein] + A + AMP + diphosphate + H(+). In terms of biological role, catalyzes the 2-thiolation of uridine at the wobble position (U34) of tRNA, leading to the formation of s(2)U34. In Roseobacter denitrificans (strain ATCC 33942 / OCh 114) (Erythrobacter sp. (strain OCh 114)), this protein is tRNA-specific 2-thiouridylase MnmA.